The sequence spans 39 residues: Cytochrome b559 subunit beta (39 aa).

A helical membrane pass occupies residues 14-30; sequence WLAVHGLAVPTVFFLGA. Residue His-18 coordinates heme.

The protein belongs to the PsbE/PsbF family. Heterodimer of an alpha subunit and a beta subunit. PSII is composed of 1 copy each of membrane proteins PsbA, PsbB, PsbC, PsbD, PsbE, PsbF, PsbH, PsbI, PsbJ, PsbK, PsbL, PsbM, PsbT, PsbX, PsbY, PsbZ, Psb30/Ycf12, at least 3 peripheral proteins of the oxygen-evolving complex and a large number of cofactors. It forms dimeric complexes. Requires heme b as cofactor.

Its subcellular location is the plastid. The protein localises to the chloroplast thylakoid membrane. Functionally, this b-type cytochrome is tightly associated with the reaction center of photosystem II (PSII). PSII is a light-driven water:plastoquinone oxidoreductase that uses light energy to abstract electrons from H(2)O, generating O(2) and a proton gradient subsequently used for ATP formation. It consists of a core antenna complex that captures photons, and an electron transfer chain that converts photonic excitation into a charge separation. This is Cytochrome b559 subunit beta from Physcomitrium patens (Spreading-leaved earth moss).